A 187-amino-acid chain; its full sequence is Transcriptional repressor NrdR (187 aa).

The tract at residues 1–21 (MQCPYCQHTNSRVLESRSSEG) is disordered. A zinc finger lies at 3 to 34 (CPYCQHTNSRVLESRSSEGGQSIRRRRECLNC). The ATP-cone domain occupies 49–139 (ITVIKHDGKK…VYGRFKGIKD (91 aa)). Polar residues-rich tracts occupy residues 152 to 162 (ISSPMSQWSKS) and 170 to 187 (SQTSPCLSLTHNGSENSR). The disordered stretch occupies residues 152–187 (ISSPMSQWSKSSTRDRDQSQTSPCLSLTHNGSENSR).

The protein belongs to the NrdR family. Zn(2+) is required as a cofactor.

Functionally, negatively regulates transcription of bacterial ribonucleotide reductase nrd genes and operons by binding to NrdR-boxes. This Crocosphaera subtropica (strain ATCC 51142 / BH68) (Cyanothece sp. (strain ATCC 51142)) protein is Transcriptional repressor NrdR.